The primary structure comprises 542 residues: Chaperonin GroEL 1 (542 aa).

ATP is bound by residues 29-32 (TIGP), 86-90 (DGTTT), G415, 479-481 (NAA), and D495.

It belongs to the chaperonin (HSP60) family. Forms a cylinder of 14 subunits composed of two heptameric rings stacked back-to-back. Interacts with the co-chaperonin GroES.

The protein resides in the cytoplasm. It carries out the reaction ATP + H2O + a folded polypeptide = ADP + phosphate + an unfolded polypeptide.. Together with its co-chaperonin GroES, plays an essential role in assisting protein folding. The GroEL-GroES system forms a nano-cage that allows encapsulation of the non-native substrate proteins and provides a physical environment optimized to promote and accelerate protein folding. The protein is Chaperonin GroEL 1 of Streptomyces avermitilis (strain ATCC 31267 / DSM 46492 / JCM 5070 / NBRC 14893 / NCIMB 12804 / NRRL 8165 / MA-4680).